A 168-amino-acid polypeptide reads, in one-letter code: uncharacterized protein (168 aa).

This is an uncharacterized protein from Mycoplasma pneumoniae (strain ATCC 29342 / M129 / Subtype 1) (Mycoplasmoides pneumoniae).